A 181-amino-acid chain; its full sequence is Ribonuclease HII (181 aa).

In terms of domain architecture, RNase H type-2 spans 1-181 (MICGIDEVGR…SLHRRNFKLI (181 aa)). A divalent metal cation contacts are provided by D6, E7, and D98.

The protein belongs to the RNase HII family. Mn(2+) is required as a cofactor. Requires Mg(2+) as cofactor.

The protein resides in the cytoplasm. The catalysed reaction is Endonucleolytic cleavage to 5'-phosphomonoester.. In terms of biological role, endonuclease that specifically degrades the RNA of RNA-DNA hybrids. The protein is Ribonuclease HII of Borrelia garinii subsp. bavariensis (strain ATCC BAA-2496 / DSM 23469 / PBi) (Borreliella bavariensis).